Here is a 459-residue protein sequence, read N- to C-terminus: Glycosyl hydrolase family 109 protein (459 aa).

Positions 1-31 (MHNIHRRHFLKAAGAVTAGLITANITASTHA) form a signal peptide, tat-type signal. NAD(+)-binding positions include 64 to 65 (ER), D86, 135 to 138 (WEWH), 155 to 156 (EV), and N184. Substrate-binding positions include Y213, R232, 244-247 (YPTH), and Y326. Residue Y244 participates in NAD(+) binding.

The protein belongs to the Gfo/Idh/MocA family. Glycosyl hydrolase 109 subfamily. Requires NAD(+) as cofactor. Predicted to be exported by the Tat system. The position of the signal peptide cleavage has not been experimentally proven.

Its function is as follows. Glycosidase. The polypeptide is Glycosyl hydrolase family 109 protein (Shewanella sp. (strain W3-18-1)).